A 202-amino-acid chain; its full sequence is Tetranectin (202 aa).

Positions M1–A21 are cleaved as a signal peptide. Cystine bridges form between C71/C81, C98/C197, and C173/C189. The C-type lectin domain maps to V77 to Q198.

Homotrimer. As to expression, highest expression in lung, skeletal muscle and heart. Expressed in retina.

The protein resides in the secreted. In terms of biological role, tetranectin binds to plasminogen and to isolated kringle 4. May be involved in the packaging of molecules destined for exocytosis. Plays a role in retinal function. The chain is Tetranectin (Clec3b) from Mus musculus (Mouse).